A 308-amino-acid polypeptide reads, in one-letter code: Ribonuclease HIII (308 aa).

In terms of domain architecture, RNase H type-2 spans 91–308 (KNVIGSDEVG…TEKALKMVKK (218 aa)). Residues Asp97, Glu98, and Asp202 each coordinate a divalent metal cation.

It belongs to the RNase HII family. RnhC subfamily. It depends on Mn(2+) as a cofactor. Mg(2+) is required as a cofactor.

The protein resides in the cytoplasm. The enzyme catalyses Endonucleolytic cleavage to 5'-phosphomonoester.. Functionally, endonuclease that specifically degrades the RNA of RNA-DNA hybrids. This Listeria monocytogenes serotype 4b (strain F2365) protein is Ribonuclease HIII.